The sequence spans 588 residues: Phosphomethylpyrimidine synthase (588 aa).

Substrate contacts are provided by residues Asn-212, Met-241, Tyr-270, His-306, 326 to 328, 367 to 370, and Glu-406; these read SRG and DGLR. Residue His-410 coordinates Zn(2+). Tyr-433 is a substrate binding site. His-474 lines the Zn(2+) pocket. The [4Fe-4S] cluster site is built by Cys-554, Cys-557, and Cys-562.

Belongs to the ThiC family. Homodimer. It depends on [4Fe-4S] cluster as a cofactor.

It catalyses the reaction 5-amino-1-(5-phospho-beta-D-ribosyl)imidazole + S-adenosyl-L-methionine = 4-amino-2-methyl-5-(phosphooxymethyl)pyrimidine + CO + 5'-deoxyadenosine + formate + L-methionine + 3 H(+). The protein operates within cofactor biosynthesis; thiamine diphosphate biosynthesis. In terms of biological role, catalyzes the synthesis of the hydroxymethylpyrimidine phosphate (HMP-P) moiety of thiamine from aminoimidazole ribotide (AIR) in a radical S-adenosyl-L-methionine (SAM)-dependent reaction. In Bartonella quintana (strain Toulouse) (Rochalimaea quintana), this protein is Phosphomethylpyrimidine synthase.